The chain runs to 374 residues: Putative zinc metalloprotease R01501 (374 aa).

A Zn(2+)-binding site is contributed by His26. Glu27 is a catalytic residue. His30 is a binding site for Zn(2+). 4 helical membrane passes run 36-55 (WSGIRILAFSVGFGPELFGW), 112-134 (AATVAAGPIANFLLAIAIFAVLF), 301-323 (VLNFAAVLSVSIGLLNLMPVPVL), and 348-367 (LAFRIGFAMVLMLTVFAAWN). The 74-residue stretch at 126-199 (AIAIFAVLFS…LPITVRIERE (74 aa)) folds into the PDZ domain.

It belongs to the peptidase M50B family. The cofactor is Zn(2+).

The protein localises to the cell inner membrane. This chain is Putative zinc metalloprotease R01501, found in Rhizobium meliloti (strain 1021) (Ensifer meliloti).